We begin with the raw amino-acid sequence, 366 residues long: Galactose-1-phosphate uridylyltransferase (366 aa).

Position 27 is a phosphoserine (Ser27). The Zn(2+) site is built by Cys54 and Cys57. UDP-alpha-D-glucose contacts are provided by residues Ala63 and 79–80 (ND). His124 lines the Zn(2+) pocket. Residue Asn169 coordinates UDP-alpha-D-glucose. Position 180 (His180) interacts with Zn(2+). The Tele-UMP-histidine intermediate role is filled by His182. Gln184 contributes to the UDP-alpha-D-glucose binding site. Glu198, His297, His314, and His316 together coordinate Fe cation. UDP-alpha-D-glucose contacts are provided by residues 329-332 (KFLV) and 334-335 (FE).

This sequence belongs to the galactose-1-phosphate uridylyltransferase type 1 family. Homodimer. The cofactor is Zn(2+).

The catalysed reaction is alpha-D-galactose 1-phosphate + UDP-alpha-D-glucose = alpha-D-glucose 1-phosphate + UDP-alpha-D-galactose. It participates in carbohydrate metabolism; galactose metabolism. The sequence is that of Galactose-1-phosphate uridylyltransferase (GAL7) from Saccharomyces cerevisiae (strain ATCC 204508 / S288c) (Baker's yeast).